Reading from the N-terminus, the 514-residue chain is 2-isopropylmalate synthase (514 aa).

The Pyruvate carboxyltransferase domain occupies 5 to 268 (LIIFDTTLRD…DVGIDTTQIV (264 aa)). The Mn(2+) site is built by aspartate 14, histidine 202, histidine 204, and asparagine 239. The tract at residues 395-514 (KFVSLSQHSE…KDDKLNPQRA (120 aa)) is regulatory domain.

This sequence belongs to the alpha-IPM synthase/homocitrate synthase family. LeuA type 1 subfamily. In terms of assembly, homodimer. Mn(2+) is required as a cofactor.

The protein resides in the cytoplasm. The catalysed reaction is 3-methyl-2-oxobutanoate + acetyl-CoA + H2O = (2S)-2-isopropylmalate + CoA + H(+). Its pathway is amino-acid biosynthesis; L-leucine biosynthesis; L-leucine from 3-methyl-2-oxobutanoate: step 1/4. Catalyzes the condensation of the acetyl group of acetyl-CoA with 3-methyl-2-oxobutanoate (2-ketoisovalerate) to form 3-carboxy-3-hydroxy-4-methylpentanoate (2-isopropylmalate). The sequence is that of 2-isopropylmalate synthase from Burkholderia vietnamiensis (strain G4 / LMG 22486) (Burkholderia cepacia (strain R1808)).